A 415-amino-acid chain; its full sequence is Branched-chain-amino-acid aminotransferase, cytosolic (415 aa).

Lys244 bears the N6-(pyridoxal phosphate)lysine mark.

This sequence belongs to the class-IV pyridoxal-phosphate-dependent aminotransferase family. Pyridoxal 5'-phosphate is required as a cofactor.

Its subcellular location is the cytoplasm. The enzyme catalyses L-leucine + 2-oxoglutarate = 4-methyl-2-oxopentanoate + L-glutamate. The catalysed reaction is L-isoleucine + 2-oxoglutarate = (S)-3-methyl-2-oxopentanoate + L-glutamate. It carries out the reaction L-valine + 2-oxoglutarate = 3-methyl-2-oxobutanoate + L-glutamate. Catalyzes the first reaction in the catabolism of the essential branched chain amino acids leucine, isoleucine, and valine. This is Branched-chain-amino-acid aminotransferase, cytosolic (bcat-1) from Caenorhabditis elegans.